We begin with the raw amino-acid sequence, 124 residues long: uncharacterized protein (124 aa).

Its subcellular location is the cytoplasm. The protein localises to the nucleus. This is an uncharacterized protein from Schizosaccharomyces pombe (strain 972 / ATCC 24843) (Fission yeast).